The following is a 520-amino-acid chain: MNQQVIIFDTTLRDGEQALQASLCVNEKLQIALALERMGVDIMEVGFPVSSPGDFESVQTIAKQIKNSRVCALARCVEKDIDVAAEALKVADAFRIHVFLATSDLHIESKLKKTFENVMEMATQSIKRARRYTDDVEFSCEDAGRTPIDNLCRIVENAIKAGATTINIPDTVGYTTPYQFGGIITNLIERVPNIDKAIISVHCHDDLGMSVANSITAVQSGARQIEGTINGLGERAGNCSLEEVIMAIKVRQQMLGVYTNINHQEIYRTSQLVSQLCNMPIPANKAIVGSNAFSHSSGIHQDGVLKNRETYEIMTPESIGLKEIQLNLTSRSGRAAVKHRMEEMGYQDKDYDLGSLYEAFLRLADKKGQVFDYDLEALAFINLQQQEPEFFHLDNFNIQSGSNVMATAAVCLVCGKELKSEAATGNGPVDAVYQAISRITEYPIELVSYQLSGKGQGKNALGQVNIVVECFGRRFHGMGLETDIVESSAKAMVHALNCVWRTEQVKKEKQRIQQNTKEMV.

In terms of domain architecture, Pyruvate carboxyltransferase spans 5–267 (VIIFDTTLRD…YTNINHQEIY (263 aa)). Positions 14, 202, 204, and 238 each coordinate Mn(2+). The interval 392–520 (HLDNFNIQSG…RIQQNTKEMV (129 aa)) is regulatory domain.

This sequence belongs to the alpha-IPM synthase/homocitrate synthase family. LeuA type 1 subfamily. As to quaternary structure, homodimer. Mn(2+) serves as cofactor.

Its subcellular location is the cytoplasm. The catalysed reaction is 3-methyl-2-oxobutanoate + acetyl-CoA + H2O = (2S)-2-isopropylmalate + CoA + H(+). Its pathway is amino-acid biosynthesis; L-leucine biosynthesis; L-leucine from 3-methyl-2-oxobutanoate: step 1/4. In terms of biological role, catalyzes the condensation of the acetyl group of acetyl-CoA with 3-methyl-2-oxobutanoate (2-ketoisovalerate) to form 3-carboxy-3-hydroxy-4-methylpentanoate (2-isopropylmalate). This Photorhabdus laumondii subsp. laumondii (strain DSM 15139 / CIP 105565 / TT01) (Photorhabdus luminescens subsp. laumondii) protein is 2-isopropylmalate synthase.